A 516-amino-acid polypeptide reads, in one-letter code: High-affinity nitrate transporter 2.3 (516 aa).

12 helical membrane-spanning segments follow: residues Trp-52–Ile-72, Leu-76–Phe-96, Leu-112–Gln-132, Phe-142–Phe-162, Gly-172–Val-192, Ile-209–Gly-229, Trp-265–Val-285, Thr-299–Gly-319, Leu-335–Ile-354, Val-367–Val-387, Ile-395–Phe-415, and Gly-425–Phe-445. A disordered region spans residues Ser-489–Val-516.

The protein belongs to the major facilitator superfamily. Nitrate/nitrite porter (TC 2.A.1.8) family. In terms of assembly, heterotetramer composed of two NRT2.3 and two NAR2.1. Isoform 1 interacts with NAR2.1, but not isoform 2. As to expression, expressed in the stelar cells of both primary and lateral roots, particularly at the site of lateral root emergence, root-shoot junction zone, vascular tissues of adventitious root primordia, leaves, germ tips and seed scutellum.

The protein resides in the cell membrane. Involved in nitrate transport, but does not seem to be able to mediate transport by its own. Acts as a dual component transporter with NAR2.1. Imports nitrate with high affinity when expressed with NAR2.1 in a heterologous system (Xenopus oocytes). Plays a key role in long-distance nitrate transport from root to shoot particularly at low external nitrate supply. The sequence is that of High-affinity nitrate transporter 2.3 (NRT2.3) from Oryza sativa subsp. japonica (Rice).